We begin with the raw amino-acid sequence, 405 residues long: Phosphoglycerate kinase (405 aa).

Substrate is bound by residues 23-25, R39, 62-65, R121, and R154; these read DFN and HLGR. ATP-binding positions include K207, G298, E329, and 355 to 358; that span reads GGDT.

The protein belongs to the phosphoglycerate kinase family. As to quaternary structure, monomer.

It is found in the cytoplasm. It carries out the reaction (2R)-3-phosphoglycerate + ATP = (2R)-3-phospho-glyceroyl phosphate + ADP. Its pathway is carbohydrate degradation; glycolysis; pyruvate from D-glyceraldehyde 3-phosphate: step 2/5. This is Phosphoglycerate kinase from Campylobacter hominis (strain ATCC BAA-381 / DSM 21671 / CCUG 45161 / LMG 19568 / NCTC 13146 / CH001A).